An 842-amino-acid polypeptide reads, in one-letter code: ATP-binding cassette sub-family B member 6 (842 aa).

Over Met-1 to Cys-26 the chain is Lumenal. Residues Met-1–Trp-205 form a required for the lysosomal targeting region. A required for ATPase activity region spans residues Met-1–Arg-236. A disulfide bridge connects residues Cys-8 and Cys-26. The chain crosses the membrane as a helical span at residues Phe-27 to Val-47. Topologically, residues Leu-48 to Pro-72 are cytoplasmic. The chain crosses the membrane as a helical span at residues Tyr-73–Gly-93. Residues Arg-94–Tyr-106 are Lumenal-facing. A helical membrane pass occupies residues Leu-107–Val-127. At Glu-128–Ser-147 the chain is on the cytoplasmic side. Residues Leu-148–Trp-168 traverse the membrane as a helical segment. Over Asn-169–Gln-185 the chain is Lumenal. A helical membrane pass occupies residues Phe-186 to Ala-206. Residues Pro-207 to Leu-263 are Cytoplasmic-facing. Residues Ile-264 to Ile-284 form a helical membrane-spanning segment. In terms of domain architecture, ABC transmembrane type-1 spans Val-265 to Thr-556. At Phe-285–Asn-291 the chain is on the lumenal side. Residues Leu-292–Leu-312 traverse the membrane as a helical segment. Residues Lys-313 to Arg-375 are Cytoplasmic-facing. A helical membrane pass occupies residues Gly-376–Ala-396. A topological domain (lumenal) is located at residue Asp-397. Residues Ile-398–Phe-418 form a helical membrane-spanning segment. Over Leu-419–Gln-499 the chain is Cytoplasmic. A helical membrane pass occupies residues Thr-500–Val-520. Residues Ser-521–Asp-529 are Lumenal-facing. A helical membrane pass occupies residues Phe-530–Tyr-550. Residues Tyr-551–Ala-842 are Cytoplasmic-facing. Residues Ile-590–Leu-824 form the ABC transporter domain. ATP contacts are provided by residues Tyr-599 and Gly-623–Arg-634.

It belongs to the ABC transporter superfamily. ABCB family. Heavy Metal importer (TC 3.A.1.210) subfamily. Homodimer. Post-translationally, N-glycosylated.

The protein localises to the cell membrane. The protein resides in the mitochondrion outer membrane. Its subcellular location is the endoplasmic reticulum membrane. It is found in the golgi apparatus membrane. It localises to the endosome membrane. The protein localises to the lysosome membrane. The protein resides in the late endosome membrane. Its subcellular location is the early endosome membrane. It is found in the secreted. It localises to the extracellular exosome. The protein localises to the mitochondrion. The protein resides in the endosome. Its subcellular location is the multivesicular body membrane. It is found in the melanosome membrane. The enzyme catalyses coproporphyrin III(in) + ATP + H2O = coproporphyrin III(out) + ADP + phosphate + H(+). It carries out the reaction coproporphyrinogen III(in) + ATP + H2O = coproporphyrinogen III(out) + ADP + phosphate + H(+). It catalyses the reaction heme b(in) + ATP + H2O = heme b(out) + ADP + phosphate + H(+). The catalysed reaction is pheophorbide a(in) + ATP + H2O = pheophorbide a(out) + ADP + phosphate + H(+). The enzyme catalyses protoporphyrin IX(in) + ATP + H2O = protoporphyrin IX(out) + ADP + phosphate + H(+). It carries out the reaction coproporphyrin I(in) + ATP + H2O = coproporphyrin I(out) + ADP + phosphate + H(+). It catalyses the reaction uroporphyrin I(in) + ATP + H2O = uroporphyrin I(out) + ADP + phosphate + H(+). The catalysed reaction is uroporphyrin III(in) + ATP + H2O = uroporphyrin III(out) + ADP + phosphate + H(+). In terms of biological role, ATP-dependent transporter that catalyzes the transport of a broad-spectrum of porphyrins from the cytoplasm to the extracellular space through the plasma membrane or into the vesicle lumen. May also function as an ATP-dependent importer of porphyrins from the cytoplasm into the mitochondria, in turn may participate in the de novo heme biosynthesis regulation and in the coordination of heme and iron homeostasis during phenylhydrazine stress. May play a key role in the early steps of melanogenesis producing PMEL amyloid fibrils. In vitro, it confers to cells a resistance to toxic metal such as arsenic and cadmium and against chemotherapeutics agent such as 5-fluorouracil, SN-38 and vincristin. In addition may play a role in the transition metal homeostasis. In Mus musculus (Mouse), this protein is ATP-binding cassette sub-family B member 6.